A 635-amino-acid polypeptide reads, in one-letter code: 1-deoxy-D-xylulose-5-phosphate synthase (635 aa).

Thiamine diphosphate-binding positions include His-72 and 113 to 115; that span reads GHA. Residue Asp-144 coordinates Mg(2+). Residues 145–146, Asn-174, Tyr-287, and Glu-370 each bind thiamine diphosphate; that span reads GA. Asn-174 lines the Mg(2+) pocket.

It belongs to the transketolase family. DXPS subfamily. Homodimer. Mg(2+) is required as a cofactor. It depends on thiamine diphosphate as a cofactor.

The catalysed reaction is D-glyceraldehyde 3-phosphate + pyruvate + H(+) = 1-deoxy-D-xylulose 5-phosphate + CO2. Its pathway is metabolic intermediate biosynthesis; 1-deoxy-D-xylulose 5-phosphate biosynthesis; 1-deoxy-D-xylulose 5-phosphate from D-glyceraldehyde 3-phosphate and pyruvate: step 1/1. Functionally, catalyzes the acyloin condensation reaction between C atoms 2 and 3 of pyruvate and glyceraldehyde 3-phosphate to yield 1-deoxy-D-xylulose-5-phosphate (DXP). The protein is 1-deoxy-D-xylulose-5-phosphate synthase of Trichormus variabilis (strain ATCC 29413 / PCC 7937) (Anabaena variabilis).